Reading from the N-terminus, the 262-residue chain is 4-hydroxy-2-oxo-heptane-1,7-dioate aldolase (262 aa).

Histidine 45 serves as the catalytic Proton acceptor. Position 147 (glutamine 147) interacts with substrate. Glutamate 149 lines the a divalent metal cation pocket. Substrate is bound by residues alanine 174 and aspartate 175. Residue aspartate 175 participates in a divalent metal cation binding.

It belongs to the HpcH/HpaI aldolase family. As to quaternary structure, homohexamer; trimer of dimers. The cofactor is a divalent metal cation.

The enzyme catalyses 4-hydroxy-2-oxoheptanedioate = succinate semialdehyde + pyruvate. The protein operates within aromatic compound metabolism; 4-hydroxyphenylacetate degradation; pyruvate and succinate semialdehyde from 4-hydroxyphenylacetate: step 7/7. Functionally, catalyzes the reversible retro-aldol cleavage of 4-hydroxy-2-ketoheptane-1,7-dioate (HKHD) to pyruvate and succinic semialdehyde. This chain is 4-hydroxy-2-oxo-heptane-1,7-dioate aldolase, found in Shigella boydii serotype 18 (strain CDC 3083-94 / BS512).